A 332-amino-acid polypeptide reads, in one-letter code: DNA packaging protein (332 aa).

Residues M1–R207 are ATPase. G24 to S31 contacts ATP. A DNA-binding region spans residues K233–Q332.

This sequence belongs to the phi29likevirus gp16 family. In terms of assembly, homopentamer. Interacts with the packaging RNA (pRNA). Part of a DNA-gp3-gp16 complex.

The catalysed reaction is ATP + H2O = ADP + phosphate + H(+). Its function is as follows. ATPase required for the genome encapsidation reaction. Part of the active packaging motor via the binding to the packaging RNA (pRNA), itself fixed to the head-tail connector at the unique portal vertex of the prohead. Binds and supercoils the pre-formed, unit-length DNA bound to gp3 to produce an initiation complex for DNA packaging. Provides the energy to actively pump the viral DNA into the prohead. Approximately one molecule of ATP is used in the packaging of 2 bp of viral DNA. ATP hydrolysis results in a conformational change that causes the arginine/lysine finger of one subunit to move into the active site of its neighbor, where it interacts with the negatively charged oxygens on the gamma-phosphate of ATP. After packaging, the ATPase and the pRNA are released from the prohead. In Bacillus subtilis (Bacteriophage PZA), this protein is DNA packaging protein (16).